The following is a 181-amino-acid chain: Large ribosomal subunit protein uL5 (181 aa).

Belongs to the universal ribosomal protein uL5 family. As to quaternary structure, part of the 50S ribosomal subunit; part of the 5S rRNA/L5/L18/L25 subcomplex. Contacts the 5S rRNA and the P site tRNA. Forms a bridge to the 30S subunit in the 70S ribosome.

In terms of biological role, this is one of the proteins that bind and probably mediate the attachment of the 5S RNA into the large ribosomal subunit, where it forms part of the central protuberance. In the 70S ribosome it contacts protein S13 of the 30S subunit (bridge B1b), connecting the 2 subunits; this bridge is implicated in subunit movement. Contacts the P site tRNA; the 5S rRNA and some of its associated proteins might help stabilize positioning of ribosome-bound tRNAs. The sequence is that of Large ribosomal subunit protein uL5 from Onion yellows phytoplasma (strain OY-M).